The chain runs to 435 residues: D-amino acid dehydrogenase (435 aa).

Position 3-17 (3-17) interacts with FAD; it reads VIVLGGGVLGVSTAW.

It belongs to the DadA oxidoreductase family. Requires FAD as cofactor.

It carries out the reaction a D-alpha-amino acid + A + H2O = a 2-oxocarboxylate + AH2 + NH4(+). It functions in the pathway amino-acid degradation; D-alanine degradation; NH(3) and pyruvate from D-alanine: step 1/1. In terms of biological role, oxidative deamination of D-amino acids. The sequence is that of D-amino acid dehydrogenase from Chromobacterium violaceum (strain ATCC 12472 / DSM 30191 / JCM 1249 / CCUG 213 / NBRC 12614 / NCIMB 9131 / NCTC 9757 / MK).